A 227-amino-acid polypeptide reads, in one-letter code: uncharacterized protein (227 aa).

This is an uncharacterized protein from Caenorhabditis elegans.